We begin with the raw amino-acid sequence, 388 residues long: GTPase Obg (388 aa).

One can recognise an Obg domain in the interval 1-159 (MKFVDEAVIR…RSLKLELLLL (159 aa)). The 174-residue stretch at 160 to 333 (ADVGLLGMPN…LALKLLDYIA (174 aa)) folds into the OBG-type G domain. Residues 166–173 (GMPNAGKS), 191–195 (FTTLV), 213–216 (DIPG), 283–286 (NKTD), and 314–316 (SAY) contribute to the GTP site. Mg(2+) is bound by residues S173 and T193.

Belongs to the TRAFAC class OBG-HflX-like GTPase superfamily. OBG GTPase family. Monomer. It depends on Mg(2+) as a cofactor.

It localises to the cytoplasm. Functionally, an essential GTPase which binds GTP, GDP and possibly (p)ppGpp with moderate affinity, with high nucleotide exchange rates and a fairly low GTP hydrolysis rate. Plays a role in control of the cell cycle, stress response, ribosome biogenesis and in those bacteria that undergo differentiation, in morphogenesis control. The polypeptide is GTPase Obg (Shewanella putrefaciens (strain CN-32 / ATCC BAA-453)).